The chain runs to 448 residues: Glutamate--tRNA ligase 1 (448 aa).

The short motif at 10-20 (PSPTGMLHVGN) is the 'HIGH' region element. The short motif at 240–244 (KISKR) is the 'KMSKS' region element. K243 is a binding site for ATP.

The protein belongs to the class-I aminoacyl-tRNA synthetase family. Glutamate--tRNA ligase type 1 subfamily. As to quaternary structure, monomer.

It is found in the cytoplasm. The enzyme catalyses tRNA(Glu) + L-glutamate + ATP = L-glutamyl-tRNA(Glu) + AMP + diphosphate. Functionally, catalyzes the attachment of glutamate to tRNA(Glu) in a two-step reaction: glutamate is first activated by ATP to form Glu-AMP and then transferred to the acceptor end of tRNA(Glu). The polypeptide is Glutamate--tRNA ligase 1 (Rickettsia typhi (strain ATCC VR-144 / Wilmington)).